The primary structure comprises 314 residues: Methionyl-tRNA formyltransferase (314 aa).

110–113 is a (6S)-5,6,7,8-tetrahydrofolate binding site; that stretch reads SLLP.

It belongs to the Fmt family.

It carries out the reaction L-methionyl-tRNA(fMet) + (6R)-10-formyltetrahydrofolate = N-formyl-L-methionyl-tRNA(fMet) + (6S)-5,6,7,8-tetrahydrofolate + H(+). Functionally, attaches a formyl group to the free amino group of methionyl-tRNA(fMet). The formyl group appears to play a dual role in the initiator identity of N-formylmethionyl-tRNA by promoting its recognition by IF2 and preventing the misappropriation of this tRNA by the elongation apparatus. In Bacillus mycoides (strain KBAB4) (Bacillus weihenstephanensis), this protein is Methionyl-tRNA formyltransferase.